The following is a 510-amino-acid chain: Global transcription regulator sge1 (510 aa).

Disordered regions lie at residues 94-152 (PPGE…ASRN), 393-438 (HPFM…QQHS), and 469-510 (LGGT…MGRL). Positions 123–143 (NTGMNGTATGANAANLSSAGS) are enriched in low complexity. Polar residues-rich tracts occupy residues 471 to 480 (GTNTDQSQPF) and 501 to 510 (PGSNNSMGRL).

The protein belongs to the MIT1/WOR1 family.

It is found in the nucleus. Its function is as follows. Global transcriptional regulator of pathogenicity. Differentially regulates expression of effector genes. Also required for radial growth and production of asexual conidiospores, and plays a role in mycelium pigmentation. Not required for induction of Ave1, the effector that activates resistance mediated by the Ve1 immune receptor in tomato. The sequence is that of Global transcription regulator sge1 from Verticillium dahliae (strain VdLs.17 / ATCC MYA-4575 / FGSC 10137) (Verticillium wilt).